Reading from the N-terminus, the 178-residue chain is GPI mannosyltransferase 2 subunit C167.09 (178 aa).

Residues 1-20 form the signal peptide; the sequence is MREFRLIFVLLFFLPSFAIA. Residues 21–152 lie on the Lumenal side of the membrane; sequence NTEIINVETG…LGFLPKSVLP (132 aa). N-linked (GlcNAc...) asparagine glycosylation is found at N48, N49, N106, N115, and N122. The chain crosses the membrane as a helical span at residues 153–173; sequence IVGFVFVIILIALICMTNLFI. At 174 to 178 the chain is on the cytoplasmic side; the sequence is KHKRD.

As to quaternary structure, part of the GPI mannosyltransferase 2 complex composed of gpi18 and C167.09.

The protein resides in the endoplasmic reticulum membrane. It functions in the pathway glycolipid biosynthesis; glycosylphosphatidylinositol-anchor biosynthesis. Functionally, essential component of the GPI mannosyltransferase 2 complex. Responsible for the transfer of the second mannose to the glycosylphosphatidylinositol during GPI precursor assembly. In Schizosaccharomyces pombe (strain 972 / ATCC 24843) (Fission yeast), this protein is GPI mannosyltransferase 2 subunit C167.09.